We begin with the raw amino-acid sequence, 315 residues long: KH domain-containing protein At5g56140 (315 aa).

2 disordered regions span residues 1–53 (MMMM…GGLR) and 136–158 (SQFP…SPGS). Over residues 7-28 (LGGGGGGGGGSGGGIGGGGGGR) the composition is skewed to gly residues. 2 stretches are compositionally biased toward polar residues: residues 31-53 (TYSS…GGLR) and 136-146 (SQFPSERSVPS). The KH domain maps to 171–238 (DIPVDNYPNF…EHLNEPLHIL (68 aa)). Positions 289 to 315 (REEGSPMSGSVSPYNSLGMKRAKTREG) are disordered. Serine 300 carries the phosphoserine modification.

The protein resides in the nucleus. In Arabidopsis thaliana (Mouse-ear cress), this protein is KH domain-containing protein At5g56140.